A 173-amino-acid chain; its full sequence is Crossover junction endodeoxyribonuclease RuvC (173 aa).

Residues D8, E67, and D139 contribute to the active site. 3 residues coordinate Mg(2+): D8, E67, and D139.

Belongs to the RuvC family. In terms of assembly, homodimer which binds Holliday junction (HJ) DNA. The HJ becomes 2-fold symmetrical on binding to RuvC with unstacked arms; it has a different conformation from HJ DNA in complex with RuvA. In the full resolvosome a probable DNA-RuvA(4)-RuvB(12)-RuvC(2) complex forms which resolves the HJ. It depends on Mg(2+) as a cofactor.

It is found in the cytoplasm. It carries out the reaction Endonucleolytic cleavage at a junction such as a reciprocal single-stranded crossover between two homologous DNA duplexes (Holliday junction).. Functionally, the RuvA-RuvB-RuvC complex processes Holliday junction (HJ) DNA during genetic recombination and DNA repair. Endonuclease that resolves HJ intermediates. Cleaves cruciform DNA by making single-stranded nicks across the HJ at symmetrical positions within the homologous arms, yielding a 5'-phosphate and a 3'-hydroxyl group; requires a central core of homology in the junction. The consensus cleavage sequence is 5'-(A/T)TT(C/G)-3'. Cleavage occurs on the 3'-side of the TT dinucleotide at the point of strand exchange. HJ branch migration catalyzed by RuvA-RuvB allows RuvC to scan DNA until it finds its consensus sequence, where it cleaves and resolves the cruciform DNA. This is Crossover junction endodeoxyribonuclease RuvC from Shewanella sp. (strain MR-4).